Consider the following 255-residue polypeptide: Tablysin 15 (255 aa).

The first 23 residues, 1–23 (MTSIPVSSFLLAALVLQYATSDA), serve as a signal peptide directing secretion. Disulfide bonds link C27/C40, C31/C117, and C49/C110. A Cell attachment site motif is present at residues 32-34 (RGD). Residues 67 to 211 (LSKINDVRDH…KARALLTCNF (145 aa)) form the SCP domain. Residues W82, H153, and K156 each coordinate leukotriene E4. 2 cysteine pairs are disulfide-bonded: C192–C209 and C232–C243.

This sequence belongs to the CRISP family. As to expression, expressed in salivary glands.

The protein localises to the secreted. In terms of biological role, anti-inflammatory scavenger of eicosanoids and antithrombotic protein that inhibits platelets aggregation induced by collagen, ADP and convulxin (GPVI agonist). Exhibits high affinity binding for glycoprotein IIb-IIIa receptor (ITGA2B/ITGB3) and endothelial cell alphaVbeta3 (ITGAV/ITGB3) integrins, but not for alpha-5/beta-1 or alpha-2/beta-1. Accordingly, it blocks endothelial cell adhesion to vitronectin (IC(50)~1 nM) and marginally to fibronectin (IC(50)~1 uM), but not to collagen. It also inhibits fibroblast growth factor (FGF)-induced endothelial cell proliferation, and attenuates tube formation in vitro. In addition, it dose-dependently attenuates thrombus formation to collagen under flow. Also binds proinflammatory cysteinyl leukotrienes (leukotrienes C4 (LTC4), D4 (LTD4) and E4 (LTE4)) with submicromolar affinities. This chain is Tablysin 15, found in Tabanus yao (Horsefly).